The sequence spans 246 residues: Pyridoxine 5'-phosphate synthase (246 aa).

Asn6 serves as a coordination point for 3-amino-2-oxopropyl phosphate. 8–9 is a 1-deoxy-D-xylulose 5-phosphate binding site; the sequence is DH. Arg17 lines the 3-amino-2-oxopropyl phosphate pocket. The active-site Proton acceptor is His49. Residues Arg51 and His56 each coordinate 1-deoxy-D-xylulose 5-phosphate. The active-site Proton acceptor is the Glu76. Position 106 (Thr106) interacts with 1-deoxy-D-xylulose 5-phosphate. The active-site Proton donor is His196. 3-amino-2-oxopropyl phosphate-binding positions include Gly197 and 219-220; that span reads GH.

The protein belongs to the PNP synthase family. As to quaternary structure, homooctamer; tetramer of dimers.

It is found in the cytoplasm. The enzyme catalyses 3-amino-2-oxopropyl phosphate + 1-deoxy-D-xylulose 5-phosphate = pyridoxine 5'-phosphate + phosphate + 2 H2O + H(+). Its pathway is cofactor biosynthesis; pyridoxine 5'-phosphate biosynthesis; pyridoxine 5'-phosphate from D-erythrose 4-phosphate: step 5/5. Catalyzes the complicated ring closure reaction between the two acyclic compounds 1-deoxy-D-xylulose-5-phosphate (DXP) and 3-amino-2-oxopropyl phosphate (1-amino-acetone-3-phosphate or AAP) to form pyridoxine 5'-phosphate (PNP) and inorganic phosphate. This Akkermansia muciniphila (strain ATCC BAA-835 / DSM 22959 / JCM 33894 / BCRC 81048 / CCUG 64013 / CIP 107961 / Muc) protein is Pyridoxine 5'-phosphate synthase.